A 73-amino-acid chain; its full sequence is Small ribosomal subunit protein eS27 (73 aa).

Zn(2+) contacts are provided by Cys-28, Cys-31, Cys-47, and Cys-50. The C4-type zinc-finger motif lies at 28–50 (CVDCGNEQIIFGNASTEVKCHIC).

The protein belongs to the eukaryotic ribosomal protein eS27 family. Part of the 30S ribosomal subunit. Zn(2+) is required as a cofactor.

The chain is Small ribosomal subunit protein eS27 from Methanopyrus kandleri (strain AV19 / DSM 6324 / JCM 9639 / NBRC 100938).